The chain runs to 356 residues: MITKQQVLEFLKNYDLENITIATVCSHSSLQIFDGARKEGFRTLGICVGKPPKFYEAFPKAKPDEYLIVDSYSDIMNKVEELRKKNVIIIPHGSFVAYLGTENFAELTVPTFGNRAVLEWESDRDKEREWLLGAGIHMPGKIDDPRDINGPVMVKYDGAKGGKGFFVAKTYEEFDELVDRTQKYTIQEFITGTRYYLHYFYSPIRNEGYTLSEGSLELLSMDRRVESNADEIFRLGSPRELIEAGIRPTYVVTGNVPLVARESLLPLIFSLGERVVEESLGLFGGMIGAFCLETVFTDSLEIKVFEISARIVAGTNLYISGSPYADLIQEDLSTGRRIAQEIKEAVRTNQLDKIIS.

Residues H27 and S94 each coordinate 5-amino-1-(5-phospho-beta-D-ribosyl)imidazole-4-carboxamide. Residues 101-333 (TENFAELTVP…YADLIQEDLS (233 aa)) enclose the ATP-grasp domain. Residues 145-196 (PRDI…TRYY) and E226 contribute to the ATP site. N255 is a 5-amino-1-(5-phospho-beta-D-ribosyl)imidazole-4-carboxamide binding site. E293 and E306 together coordinate Mg(2+).

It belongs to the phosphohexose mutase family. It depends on Mg(2+) as a cofactor. Mn(2+) serves as cofactor.

The enzyme catalyses 5-amino-1-(5-phospho-beta-D-ribosyl)imidazole-4-carboxamide + formate + ATP = 5-formamido-1-(5-phospho-D-ribosyl)imidazole-4-carboxamide + ADP + phosphate. The protein operates within purine metabolism; IMP biosynthesis via de novo pathway; 5-formamido-1-(5-phospho-D-ribosyl)imidazole-4-carboxamide from 5-amino-1-(5-phospho-D-ribosyl)imidazole-4-carboxamide (formate route): step 1/1. Catalyzes the ATP- and formate-dependent formylation of 5-aminoimidazole-4-carboxamide-1-beta-d-ribofuranosyl 5'-monophosphate (AICAR) to 5-formaminoimidazole-4-carboxamide-1-beta-d-ribofuranosyl 5'-monophosphate (FAICAR) in the absence of folates. The polypeptide is 5-formaminoimidazole-4-carboxamide-1-(beta)-D-ribofuranosyl 5'-monophosphate synthetase (Methanosarcina acetivorans (strain ATCC 35395 / DSM 2834 / JCM 12185 / C2A)).